A 237-amino-acid polypeptide reads, in one-letter code: Ribonuclease PH (237 aa).

Phosphate contacts are provided by residues R86 and 124-126 (GTR).

This sequence belongs to the RNase PH family. In terms of assembly, homohexameric ring arranged as a trimer of dimers.

It carries out the reaction tRNA(n+1) + phosphate = tRNA(n) + a ribonucleoside 5'-diphosphate. In terms of biological role, phosphorolytic 3'-5' exoribonuclease that plays an important role in tRNA 3'-end maturation. Removes nucleotide residues following the 3'-CCA terminus of tRNAs; can also add nucleotides to the ends of RNA molecules by using nucleoside diphosphates as substrates, but this may not be physiologically important. Probably plays a role in initiation of 16S rRNA degradation (leading to ribosome degradation) during starvation. This is Ribonuclease PH from Erythrobacter litoralis (strain HTCC2594).